Here is a 1346-residue protein sequence, read N- to C-terminus: Adhesion G protein-coupled receptor F5 (1346 aa).

Residues 1–21 form the signal peptide; sequence MKSPRRTTLCLMFIVIYSSKA. The Extracellular portion of the chain corresponds to 22–1006; it reads ALNWNYESTI…MSPDSPDPSS (985 aa). Residues Asn73, Asn94, Asn106, Asn188, Asn256, Asn272, Asn301, Asn315, Asn328, Asn398, Asn472, Asn487, Asn505, Asn540, Asn627, Asn649, Asn666, Asn820, Asn931, Asn963, and Asn982 are each glycosylated (N-linked (GlcNAc...) asparagine). Positions 166-273 constitute an SEA domain; the sequence is LQEDVTLNMR…NSFQAVTINE (108 aa). Ig-like domains lie at 267 to 368, 369 to 466, and 471 to 561; these read QAVT…IDVM, PIQI…IKVT, and ANLT…KDVI. 2 cysteine pairs are disulfide-bonded: Cys293-Cys350 and Cys391-Cys449. Cys492 and Cys545 form a disulfide bridge. The GAIN-B domain occupies 842–1003; the sequence is PPLSFSQTNV…SILMSPDSPD (162 aa). Disulfide bonds link Cys954–Cys985 and Cys973–Cys987. A GPS region spans residues 954 to 1003; sequence CVFWNFRLANNTGGWDSSGCYVEEGDGDNVTCICDHLTSFSILMSPDSPD. Positions 991–1006 are tethered agonist; sequence TSFSILMSPDSPDPSS. The chain crosses the membrane as a helical span at residues 1007–1027; that stretch reads LLGILLDIISYVGVGFSILSL. The Cytoplasmic segment spans residues 1028–1053; the sequence is AACLVVEAVVWKSVTKNRTSYMRHTC. Residues 1054 to 1074 traverse the membrane as a helical segment; the sequence is IVNIAASLLVANTWFIVVAAI. Residues 1075-1090 are Extracellular-facing; the sequence is QDNRYILCKTACVAAT. The helical transmembrane segment at 1091-1111 threads the bilayer; the sequence is FFIHFFYLSVFFWMLTLGLML. Over 1112–1128 the chain is Cytoplasmic; that stretch reads FYRLVFILHETSRSTQK. The helical transmembrane segment at 1129–1149 threads the bilayer; the sequence is AIAFCLGYGCPLAISVITLGA. At 1150-1173 the chain is on the extracellular side; sequence TQPREVYTRKNVCWLNWEDTKALL. A helical transmembrane segment spans residues 1174-1194; it reads AFAIPALIIVVVNITITIVVI. Topologically, residues 1195-1220 are cytoplasmic; the sequence is TKILRPSIGDKPCKQEKSSLFQISKS. A helical transmembrane segment spans residues 1221–1241; the sequence is IGVLTPLLGLTWGFGLTTVFP. Residues 1242-1244 lie on the Extracellular side of the membrane; that stretch reads GTN. A helical transmembrane segment spans residues 1245–1265; it reads LVFHIIFAILNVFQGLFILLF. Residues 1266–1346 are Cytoplasmic-facing; the sequence is GCLWDLKVQE…NSSSASSLLN (81 aa). Thr1300 is modified (phosphothreonine). A Phosphoserine modification is found at Ser1307. The disordered stretch occupies residues 1327-1346; sequence TPEATSSSLENSSSASSLLN. Residues 1329–1346 are compositionally biased toward low complexity; the sequence is EATSSSLENSSSASSLLN.

The protein belongs to the G-protein coupled receptor 2 family. Adhesion G-protein coupled receptor (ADGR) subfamily. Homodimer; disulfide-linked. Heterodimer of 2 chains generated by proteolytic processing; the large extracellular N-terminal fragment and the membrane-bound C-terminal fragment predominantly remain associated and non-covalently linked. Fragment generates by the processing enzyme furin remains attached to the extracellular N-terminal fragment. Interacts (via N-terminal extracellular domain) with SFTPD. Post-translationally, highly glycosylated. In terms of processing, proteolytically cleaved at multiple sites: one in the GPS region of the GAIN-B domain (S1 site) and the other in the SEA domain (S2 site). The proteolytic cleavage at S1 site generates an extracellular subunit and a seven-transmembrane subunit. The proteolytic cleavage at S2 site generates a fragment that undergoes proteolytic cleavage by the processing enzyme furin. In terms of tissue distribution, expressed in lung endothelial cells and in alveolar type II (ATII) cells (at protein level). Expressed high levels in subcutaneous adipose tissue in lean individuals and at lower levels in visceral fat. Expression levels in subcutaneous adipose tissue drastically drop in obese individuals.

It is found in the cell membrane. As an adhesion G protein-coupled receptor (aGPCR) exhibits a large N-terminal extracellular domain containing highly conserved GPCR autoproteolysis-inducing (GAIN) domain. During synthesis, intracellular autoproteolytic processing of nascent chain within the GAIN domain generates a mature protein, consisting of an N-terminal fragment that is non-covalently linked to the C-terminal fragment. The mature protein is routed to the plasma membrane where the N- and C-terminal fragments remain associated, forming the holoreceptor. Dissociation of the aGPCR fragments stimulates G protein signaling through the action of the tethered-peptide agonist stalk that is occluded within the GAIN domain in the holoreceptor form. This dissociation might be induced by ligand binding, such as that of sFNDC4. Functionally, adhesion G protein-coupled receptor. In alveolar type II (ATII or AT2) cells, required for normal lung surfactant homeostasis. Modulation of both surfactant secretion and uptake by ATII cells is mediated by the downstream activation of GNAQ/GNA11 proteins and may be a consequence of increased cortical F-actin assembly induced by ADGRF5 activation. In the kidney, may play a role in the regulation of acid excretion into the primary urine, possibly by regulating the surface expression of V-ATPase proton pump. As a receptor for soluble FNDC4 (sFNDC4), required for proper systemic glucose tolerance, specifically sensitizing white adipose tissue to insulin. Also plays a role in sFNDC4-induced decrease of local inflammation in white adipose tissue. This is Adhesion G protein-coupled receptor F5 from Homo sapiens (Human).